The sequence spans 207 residues: Ribosome maturation factor RimM (207 aa).

Residues 114-207 (DDEYYWVDLI…RIDSDWPLDY (94 aa)) enclose the PRC barrel domain.

The protein belongs to the RimM family. In terms of assembly, binds ribosomal protein uS19.

Its subcellular location is the cytoplasm. An accessory protein needed during the final step in the assembly of 30S ribosomal subunit, possibly for assembly of the head region. Essential for efficient processing of 16S rRNA. May be needed both before and after RbfA during the maturation of 16S rRNA. It has affinity for free ribosomal 30S subunits but not for 70S ribosomes. This chain is Ribosome maturation factor RimM, found in Bordetella bronchiseptica (strain ATCC BAA-588 / NCTC 13252 / RB50) (Alcaligenes bronchisepticus).